Here is a 93-residue protein sequence, read N- to C-terminus: Alpha-elapitoxin-Oh3a (93 aa).

Residues 1–21 (MKTLLLTLVVVTIVCLDLGYT) form the signal peptide. 5 cysteine pairs are disulfide-bonded: Cys24/Cys42, Cys35/Cys63, Cys48/Cys52, Cys67/Cys78, and Cys79/Cys84.

This sequence belongs to the three-finger toxin family. Long-chain subfamily. Type II alpha-neurotoxin sub-subfamily. In terms of tissue distribution, expressed by the venom gland.

It is found in the secreted. Functionally, binds to muscular and neuronal nicotinic acetylcholine receptor (nAChR) and inhibits acetylcholine from binding to the receptor, thereby impairing neuromuscular and neuronal transmission. Pseudo-irreversibly inhibits twitches in chick biventer cervicis nerve-muscle preparations in a concentration-dependent manner. This chain is Alpha-elapitoxin-Oh3a, found in Ophiophagus hannah (King cobra).